A 237-amino-acid polypeptide reads, in one-letter code: Uridylate kinase (237 aa).

ATP is bound at residue 9–12 (KLSG). Gly-51 serves as a coordination point for UMP. Gly-52 and Arg-56 together coordinate ATP. UMP contacts are provided by residues Asp-71 and 132–139 (CGNPFFTT). The ATP site is built by Thr-159, Tyr-165, and Asp-168.

The protein belongs to the UMP kinase family. In terms of assembly, homohexamer.

Its subcellular location is the cytoplasm. It catalyses the reaction UMP + ATP = UDP + ADP. It functions in the pathway pyrimidine metabolism; CTP biosynthesis via de novo pathway; UDP from UMP (UMPK route): step 1/1. Inhibited by UTP. Functionally, catalyzes the reversible phosphorylation of UMP to UDP. The protein is Uridylate kinase of Prochlorococcus marinus (strain MIT 9313).